The sequence spans 472 residues: Deoxyribodipyrimidine photo-lyase (472 aa).

Positions 2-134 (TTHLVWFRQD…VCEGFDDSVI (133 aa)) constitute a Photolyase/cryptochrome alpha/beta domain. (6R)-5,10-methylene-5,6,7,8-tetrahydrofolate is bound by residues N109 and E110. Y223 is a binding site for FAD. DNA is bound at residue R227. FAD-binding positions include 235–239 (TSRLS), W272, and 275–282 (ELIWREFY). 2 interaction with DNA regions span residues 275–282 (ELIWREFY) and 342–343 (NR). Residue 373-375 (DGD) participates in FAD binding. Residue Q405 participates in DNA binding.

This sequence belongs to the DNA photolyase class-1 family. Monomer. The cofactor is FAD. (6R)-5,10-methylene-5,6,7,8-tetrahydrofolate is required as a cofactor.

The catalysed reaction is cyclobutadipyrimidine (in DNA) = 2 pyrimidine residues (in DNA).. Involved in repair of UV radiation-induced DNA damage. Catalyzes the light-dependent monomerization (300-600 nm) of cyclobutyl pyrimidine dimers (in cis-syn configuration), which are formed between adjacent bases on the same DNA strand upon exposure to ultraviolet radiation. This chain is Deoxyribodipyrimidine photo-lyase (phrB), found in Escherichia coli (strain K12).